We begin with the raw amino-acid sequence, 169 residues long: Peptide methionine sulfoxide reductase MsrA (169 aa).

C10 is an active-site residue.

This sequence belongs to the MsrA Met sulfoxide reductase family.

The enzyme catalyses L-methionyl-[protein] + [thioredoxin]-disulfide + H2O = L-methionyl-(S)-S-oxide-[protein] + [thioredoxin]-dithiol. It carries out the reaction [thioredoxin]-disulfide + L-methionine + H2O = L-methionine (S)-S-oxide + [thioredoxin]-dithiol. In terms of biological role, has an important function as a repair enzyme for proteins that have been inactivated by oxidation. Catalyzes the reversible oxidation-reduction of methionine sulfoxide in proteins to methionine. The sequence is that of Peptide methionine sulfoxide reductase MsrA from Streptococcus pyogenes serotype M12 (strain MGAS2096).